Reading from the N-terminus, the 143-residue chain is Small ribosomal subunit protein uS12 (143 aa).

Basic residues predominate over residues 1–19 (MGKPKGIRAARKLKTHRQA). Positions 1–21 (MGKPKGIRAARKLKTHRQAQR) are disordered. Pro62 bears the Hydroxyproline mark.

This sequence belongs to the universal ribosomal protein uS12 family. As to quaternary structure, component of the 40S small ribosomal subunit.

The protein localises to the cytoplasm. The protein resides in the cytosol. Its subcellular location is the rough endoplasmic reticulum. This chain is Small ribosomal subunit protein uS12 (rps-23), found in Brugia malayi (Filarial nematode worm).